A 421-amino-acid chain; its full sequence is Testin (421 aa).

Residues 92–199 (MILTNPVAAK…GDVKLPREMD (108 aa)) enclose the PET domain. The segment at 133–164 (EKQPVAGSEGAQYRKKQLAKQLPAHDQDPSKC) is disordered. A compositionally biased stretch (basic and acidic residues) spans 155–164 (PAHDQDPSKC). LIM zinc-binding domains are found at residues 234–297 (YSCY…CDSE), 299–359 (PRCA…NHAV), and 362–421 (QGCH…KMMS).

It belongs to the prickle / espinas / testin family. Interacts via LIM domain 1 with ZYX. Interacts (via LIM domain 3) with ENAH and VASP. Interacts with ALKBH4, talin, actin, alpha-actinin, GRIP1 and PXN. Interacts (via LIM domain 2) with ACTL7A (via N-terminus). Heterodimer with ACTL7A; the heterodimer interacts with ENAH to form a heterotrimer.

It is found in the cytoplasm. Its subcellular location is the cell junction. The protein localises to the focal adhesion. Functionally, scaffold protein that may play a role in cell adhesion, cell spreading and in the reorganization of the actin cytoskeleton. Plays a role in the regulation of cell proliferation. May act as a tumor suppressor. This Canis lupus familiaris (Dog) protein is Testin (TES).